A 609-amino-acid polypeptide reads, in one-letter code: Glutamine--fructose-6-phosphate aminotransferase [isomerizing] (609 aa).

The active-site Nucleophile; for GATase activity is the C2. Positions 2–218 constitute a Glutamine amidotransferase type-2 domain; sequence CGIVGAIAQR…EGDIAEITRR (217 aa). 2 consecutive SIS domains span residues 286–426 and 458–599; these read ADDL…LKGL and LAED…VDQP. K604 serves as the catalytic For Fru-6P isomerization activity.

Homodimer.

Its subcellular location is the cytoplasm. The catalysed reaction is D-fructose 6-phosphate + L-glutamine = D-glucosamine 6-phosphate + L-glutamate. In terms of biological role, catalyzes the first step in hexosamine metabolism, converting fructose-6P into glucosamine-6P using glutamine as a nitrogen source. The protein is Glutamine--fructose-6-phosphate aminotransferase [isomerizing] of Salmonella typhi.